We begin with the raw amino-acid sequence, 218 residues long: Cytochrome b6 (218 aa).

Residues Ile-35–Phe-55 traverse the membrane as a helical segment. Cys-38 contacts heme c. Positions 89 and 103 each coordinate heme b. The next 3 helical transmembrane spans lie at Ala-93 to Phe-113, Leu-119 to Tyr-139, and Leu-189 to Ile-209. His-190 and His-205 together coordinate heme b.

Belongs to the cytochrome b family. PetB subfamily. In terms of assembly, the 4 large subunits of the cytochrome b6-f complex are cytochrome b6, subunit IV (17 kDa polypeptide, PetD), cytochrome f and the Rieske protein, while the 4 small subunits are PetG, PetL, PetM and PetN. The complex functions as a dimer. The cofactor is heme b. It depends on heme c as a cofactor.

The protein localises to the cellular thylakoid membrane. Component of the cytochrome b6-f complex, which mediates electron transfer between photosystem II (PSII) and photosystem I (PSI), cyclic electron flow around PSI, and state transitions. This Synechococcus sp. (strain WH7803) protein is Cytochrome b6.